The chain runs to 302 residues: Glycine--tRNA ligase alpha subunit (302 aa).

It belongs to the class-II aminoacyl-tRNA synthetase family. Tetramer of two alpha and two beta subunits.

It localises to the cytoplasm. It carries out the reaction tRNA(Gly) + glycine + ATP = glycyl-tRNA(Gly) + AMP + diphosphate. This is Glycine--tRNA ligase alpha subunit from Xanthomonas oryzae pv. oryzae (strain PXO99A).